The primary structure comprises 226 residues: UPF0758 protein GWCH70_2550 (226 aa).

Positions 104–226 (VIRSPEDGAK…FVSLKEKGYV (123 aa)) constitute an MPN domain. H175, H177, and D188 together coordinate Zn(2+). Residues 175-188 (HNHPSGDPTPSRED) carry the JAMM motif motif.

This sequence belongs to the UPF0758 family.

The polypeptide is UPF0758 protein GWCH70_2550 (Geobacillus sp. (strain WCH70)).